The chain runs to 297 residues: 33 kDa chaperonin (297 aa).

2 cysteine pairs are disulfide-bonded: cysteine 239–cysteine 241 and cysteine 272–cysteine 275.

It belongs to the HSP33 family. Under oxidizing conditions two disulfide bonds are formed involving the reactive cysteines. Under reducing conditions zinc is bound to the reactive cysteines and the protein is inactive.

The protein localises to the cytoplasm. In terms of biological role, redox regulated molecular chaperone. Protects both thermally unfolding and oxidatively damaged proteins from irreversible aggregation. Plays an important role in the bacterial defense system toward oxidative stress. The chain is 33 kDa chaperonin from Clostridium acetobutylicum (strain ATCC 824 / DSM 792 / JCM 1419 / IAM 19013 / LMG 5710 / NBRC 13948 / NRRL B-527 / VKM B-1787 / 2291 / W).